The chain runs to 490 residues: N-succinylglutamate 5-semialdehyde dehydrogenase (490 aa).

223 to 228 (GSSRTG) contributes to the NAD(+) binding site. Catalysis depends on residues Glu-246 and Cys-280.

This sequence belongs to the aldehyde dehydrogenase family. AstD subfamily.

The enzyme catalyses N-succinyl-L-glutamate 5-semialdehyde + NAD(+) + H2O = N-succinyl-L-glutamate + NADH + 2 H(+). It participates in amino-acid degradation; L-arginine degradation via AST pathway; L-glutamate and succinate from L-arginine: step 4/5. Its function is as follows. Catalyzes the NAD-dependent reduction of succinylglutamate semialdehyde into succinylglutamate. This is N-succinylglutamate 5-semialdehyde dehydrogenase from Pseudoalteromonas atlantica (strain T6c / ATCC BAA-1087).